The following is a 590-amino-acid chain: Oleate hydratase (590 aa).

Residues alanine 33, glutamate 56, serine 64, and glutamate 82 each contribute to the FAD site. The active-site Proton acceptor is glutamate 82. The Proton donor role is filled by tyrosine 200. FAD is bound by residues valine 249, serine 291, threonine 508, and serine 512.

The protein belongs to the oleate hydratase family. Monomer and homodimer. Both forms seem to be active. It depends on FAD as a cofactor.

It carries out the reaction (R)-10-hydroxyoctadecanoate = (9Z)-octadecenoate + H2O. The catalysed reaction is (9Z)-octadecenoate + H2O = 10-hydroxyoctadecanoate. The enzyme catalyses (9Z)-hexadecenoate + H2O = 10-hydroxyhexadecanoate. It catalyses the reaction (9Z,12Z)-octadecadienoate + H2O = (12Z)-10-hydroxyoctadecenoate. It carries out the reaction (12Z)-10-hydroxyoctadecenoate + H2O = 10,13-dihydroxyoctadecanoate. The catalysed reaction is (9Z,12Z,15Z)-octadecatrienoate + H2O = (12Z,15Z)-10-hydroxyoctadecadienoate. It participates in lipid metabolism; fatty acid metabolism. In terms of biological role, catalyzes the hydration of oleate at its cis-9-double bond to yield 10-hydroxyoctadecanoate, probably in the (R) configuration, and of linoleate at its cis-9- and cis-12-double bond to yield 10-hydroxy-12-octadecenoate and 10,13-dihydroxyoctadecanoate. Is not active on trans-double bonds and esterified fatty acids as substrate; is only active on cis-9- and/or cis-12-double bond of C16 and C18 fatty acids without any trans-configurations, producing 10-hydroxy and 10,13-dihydroxy derivatives. Appears to play a role in oleic acid detoxification and bacterial virulence. The chain is Oleate hydratase (sph) from Streptococcus pyogenes serotype M49 (strain NZ131).